Reading from the N-terminus, the 204-residue chain is Outer-membrane lipoprotein carrier protein (204 aa).

The first 21 residues, 1–21 (MKKLLVACCVVSGMMSASVLA), serve as a signal peptide directing secretion.

The protein belongs to the LolA family. As to quaternary structure, monomer.

The protein localises to the periplasm. Its function is as follows. Participates in the translocation of lipoproteins from the inner membrane to the outer membrane. Only forms a complex with a lipoprotein if the residue after the N-terminal Cys is not an aspartate (The Asp acts as a targeting signal to indicate that the lipoprotein should stay in the inner membrane). This chain is Outer-membrane lipoprotein carrier protein, found in Edwardsiella ictaluri (strain 93-146).